A 317-amino-acid polypeptide reads, in one-letter code: R-spondin-3 (317 aa).

The N-terminal stretch at 1–20 (MQLQLISIVLILHFMEYTNC) is a signal peptide. FU repeat units lie at residues 34–86 (SGVS…GFYG), 92–135 (RNDC…GLVP), and 139–183 (KKEC…EFEP). 11 disulfide bridges follow: Cys-41/Cys-48, Cys-45/Cys-54, Cys-57/Cys-76, Cys-80/Cys-95, Cys-98/Cys-105, Cys-102/Cys-111, Cys-114/Cys-125, Cys-129/Cys-189, Cys-195/Cys-237, Cys-206/Cys-213, and Cys-246/Cys-253. N-linked (GlcNAc...) asparagine glycosylation is present at Asn-184. A TSP type-1 domain is found at 194–254 (HCEVSEWSEW…ECFVKKKRCK (61 aa)). Basic residues predominate over residues 251–268 (KRCKPPKGQRRGEKKKRF). Residues 251 to 317 (KRCKPPKGQR…RDQSRDAGTV (67 aa)) are disordered. Over residues 274–303 (VTAEARRERKREREKETIDREESENRNKTE) the composition is skewed to basic and acidic residues. A glycan (N-linked (GlcNAc...) asparagine) is linked at Asn-300.

This sequence belongs to the R-spondin family. In terms of assembly, binds heparin.

The protein resides in the secreted. Its function is as follows. Activator of the canonical Wnt signaling pathway by acting as a ligand for lgr4-6 receptors, which acts as a key regulator of angiogenesis. Upon binding to lgr4-6 (lgr4, lgr5 or lgr6), lgr4-6 associate with phosphorylated lrp6 and frizzled receptors that are activated by extracellular Wnt receptors, triggering the canonical Wnt signaling pathway to increase expression of target genes. Acts both in the canonical. Wnt/beta-catenin-dependent pathway and in non-canonical Wnt signaling pathway. Acts as a key regulator of angiogenesis by controlling vascular stability and pruning: acts by activating the non-canonical Wnt signaling pathway in endothelial cells. Can also amplify Wnt signaling pathway independently of LGR4-6 receptors, possibly by acting as a direct antagonistic ligand to RNF43 and ZNRF3. This is R-spondin-3 (rspo3) from Danio rerio (Zebrafish).